The following is a 62-amino-acid chain: Conotoxin Mi5.2 (62 aa).

The first 19 residues, 1-19 (MRCVPVFIILLLLIPSASS), serve as a signal peptide directing secretion. Residues 20 to 50 (VDVQPLTRDDVPLASFLDDARRTLRSPWMTR) constitute a propeptide that is removed on maturation.

The protein belongs to the conotoxin T superfamily. In terms of processing, contains 2 disulfide bonds that can be either 'C1-C3, C2-C4' or 'C1-C4, C2-C3', since these disulfide connectivities have been observed for conotoxins with cysteine framework V (for examples, see AC P0DQQ7 and AC P81755). As to expression, expressed by the venom duct.

Its subcellular location is the secreted. The chain is Conotoxin Mi5.2 from Conus miles (Soldier cone).